The sequence spans 450 residues: Aspartyl/glutamyl-tRNA(Asn/Gln) amidotransferase subunit B (450 aa).

It belongs to the GatB/GatE family. GatB subfamily. As to quaternary structure, heterotrimer of A, B and C subunits.

The enzyme catalyses L-glutamyl-tRNA(Gln) + L-glutamine + ATP + H2O = L-glutaminyl-tRNA(Gln) + L-glutamate + ADP + phosphate + H(+). It carries out the reaction L-aspartyl-tRNA(Asn) + L-glutamine + ATP + H2O = L-asparaginyl-tRNA(Asn) + L-glutamate + ADP + phosphate + 2 H(+). Functionally, allows the formation of correctly charged Asn-tRNA(Asn) or Gln-tRNA(Gln) through the transamidation of misacylated Asp-tRNA(Asn) or Glu-tRNA(Gln) in organisms which lack either or both of asparaginyl-tRNA or glutaminyl-tRNA synthetases. The reaction takes place in the presence of glutamine and ATP through an activated phospho-Asp-tRNA(Asn) or phospho-Glu-tRNA(Gln). This chain is Aspartyl/glutamyl-tRNA(Asn/Gln) amidotransferase subunit B, found in Methanobrevibacter smithii (strain ATCC 35061 / DSM 861 / OCM 144 / PS).